The following is a 305-amino-acid chain: UDP-3-O-acyl-N-acetylglucosamine deacetylase (305 aa).

Zn(2+) contacts are provided by H78, H237, and D241. The Proton donor role is filled by H264.

Belongs to the LpxC family. Requires Zn(2+) as cofactor.

It catalyses the reaction a UDP-3-O-[(3R)-3-hydroxyacyl]-N-acetyl-alpha-D-glucosamine + H2O = a UDP-3-O-[(3R)-3-hydroxyacyl]-alpha-D-glucosamine + acetate. It participates in glycolipid biosynthesis; lipid IV(A) biosynthesis; lipid IV(A) from (3R)-3-hydroxytetradecanoyl-[acyl-carrier-protein] and UDP-N-acetyl-alpha-D-glucosamine: step 2/6. Its function is as follows. Catalyzes the hydrolysis of UDP-3-O-myristoyl-N-acetylglucosamine to form UDP-3-O-myristoylglucosamine and acetate, the committed step in lipid A biosynthesis. The polypeptide is UDP-3-O-acyl-N-acetylglucosamine deacetylase (Burkholderia lata (strain ATCC 17760 / DSM 23089 / LMG 22485 / NCIMB 9086 / R18194 / 383)).